We begin with the raw amino-acid sequence, 257 residues long: Global transcriptional regulator CodY (257 aa).

Residues 1–155 form a GAF domain region; sequence MSLLSKTREL…AATVIGMEIL (155 aa). Residues 203–222 constitute a DNA-binding region (H-T-H motif); sequence ASKVADRVGITRSVIVNALR.

The protein belongs to the CodY family.

The protein resides in the cytoplasm. DNA-binding global transcriptional regulator which is involved in the adaptive response to starvation and acts by directly or indirectly controlling the expression of numerous genes in response to nutrient availability. During rapid exponential growth, CodY is highly active and represses genes whose products allow adaptation to nutrient depletion. The chain is Global transcriptional regulator CodY from Staphylococcus saprophyticus subsp. saprophyticus (strain ATCC 15305 / DSM 20229 / NCIMB 8711 / NCTC 7292 / S-41).